Consider the following 198-residue polypeptide: Dephospho-CoA kinase (198 aa).

Positions 3–198 (VVGLTGGIGA…HRRYSLLAAA (196 aa)) constitute a DPCK domain. 11-16 (GAGKST) is a binding site for ATP.

The protein belongs to the CoaE family.

It localises to the cytoplasm. The catalysed reaction is 3'-dephospho-CoA + ATP = ADP + CoA + H(+). It functions in the pathway cofactor biosynthesis; coenzyme A biosynthesis; CoA from (R)-pantothenate: step 5/5. In terms of biological role, catalyzes the phosphorylation of the 3'-hydroxyl group of dephosphocoenzyme A to form coenzyme A. This is Dephospho-CoA kinase from Methylococcus capsulatus (strain ATCC 33009 / NCIMB 11132 / Bath).